The primary structure comprises 162 residues: Large ribosomal subunit protein uL15 (162 aa).

Residues 1 to 10 (MNLNELRDNA) are compositionally biased toward basic and acidic residues. The segment at 1–39 (MNLNELRDNAGSRYRKKRLGRGIGSGKGKTSGKGVKGQK) is disordered. Gly residues predominate over residues 21 to 35 (RGIGSGKGKTSGKGV).

Belongs to the universal ribosomal protein uL15 family. As to quaternary structure, part of the 50S ribosomal subunit.

Binds to the 23S rRNA. This is Large ribosomal subunit protein uL15 from Gluconacetobacter diazotrophicus (strain ATCC 49037 / DSM 5601 / CCUG 37298 / CIP 103539 / LMG 7603 / PAl5).